Here is a 378-residue protein sequence, read N- to C-terminus: S-adenosylmethionine:tRNA ribosyltransferase-isomerase (378 aa).

It belongs to the QueA family. In terms of assembly, monomer.

Its subcellular location is the cytoplasm. The catalysed reaction is 7-aminomethyl-7-carbaguanosine(34) in tRNA + S-adenosyl-L-methionine = epoxyqueuosine(34) in tRNA + adenine + L-methionine + 2 H(+). Its pathway is tRNA modification; tRNA-queuosine biosynthesis. Transfers and isomerizes the ribose moiety from AdoMet to the 7-aminomethyl group of 7-deazaguanine (preQ1-tRNA) to give epoxyqueuosine (oQ-tRNA). The sequence is that of S-adenosylmethionine:tRNA ribosyltransferase-isomerase from Prochlorococcus marinus (strain MIT 9312).